The sequence spans 671 residues: Fusexin 1 (671 aa).

Residues methionine 1–tryptophan 12 are Cytoplasmic-facing. Residues valine 13 to isoleucine 33 traverse the membrane as a helical segment. At threonine 34–glutamate 574 the chain is on the extracellular side. Intrachain disulfides connect cysteine 145/cysteine 180, cysteine 409/cysteine 452, cysteine 480/cysteine 500, and cysteine 513/cysteine 528. The tract at residues glycine 168 to tyrosine 173 is fusion loop. Residues methionine 575 to leucine 595 form a helical membrane-spanning segment. The Cytoplasmic portion of the chain corresponds to glycine 596–arginine 628. The chain crosses the membrane as a helical span at residues phenylalanine 629–leucine 649. Residue valine 650 is a topological domain, extracellular. Residues proline 651–phenylalanine 671 form a helical membrane-spanning segment.

This sequence belongs to the HAP2/GCS1 family. Fusexin 1 subfamily. In terms of assembly, homotrimer stabilized by interdomain contacts and numerous Ca(2+) and Na(+) ions.

The protein localises to the cell surface. Its subcellular location is the cell membrane. Functionally, exhibits fusogenic activity. Mediates cell-cell fusion in mammalian cells (bilateral fusion). The sequence is that of Fusexin 1 from Natrinema altunense (strain JCM 12890 / CGMCC 1.3731 / AJ2).